Reading from the N-terminus, the 134-residue chain is (R)-specific enoyl-CoA hydratase (134 aa).

Residues 5 to 119 (SLEVGQKARL…ATLTTRIFTQ (115 aa)) form the MaoC-like domain. Residues 32–37 (DFNPLH), Gly55, and Phe84 each bind a (3R)-3-hydroxyacyl-CoA.

In terms of assembly, homodimer.

The catalysed reaction is a (3R)-3-hydroxyacyl-CoA = a (2E)-enoyl-CoA + H2O. Functionally, catalyzes the hydration of trans-2-enoyl-CoA with a chain-length of 4-6 carbon atoms, forming the corresponding (3R)-3-hydroxyacyl-CoA. The protein is (R)-specific enoyl-CoA hydratase (phaJ) of Aeromonas caviae (Aeromonas punctata).